Consider the following 160-residue polypeptide: Cytochrome b6-f complex subunit 4 (160 aa).

3 consecutive transmembrane segments (helical) span residues 36–56, 95–115, and 131–151; these read LLYV…GLAV, LLGI…PFIE, and TFFM…IFPI.

Belongs to the cytochrome b family. PetD subfamily. In terms of assembly, the 4 large subunits of the cytochrome b6-f complex are cytochrome b6, subunit IV (17 kDa polypeptide, PetD), cytochrome f and the Rieske protein, while the 4 small subunits are PetG, PetL, PetM and PetN. The complex functions as a dimer.

It localises to the cellular thylakoid membrane. In terms of biological role, component of the cytochrome b6-f complex, which mediates electron transfer between photosystem II (PSII) and photosystem I (PSI), cyclic electron flow around PSI, and state transitions. The protein is Cytochrome b6-f complex subunit 4 of Gloeothece citriformis (strain PCC 7424) (Cyanothece sp. (strain PCC 7424)).